Here is a 451-residue protein sequence, read N- to C-terminus: MGKKLFGTDGLRGRVNIYPMTPEVALRLGLAAGTYYRRKSHRSRVVIGKDTRISGYIFENALTAGLLASGMDVFLVGPLPTPAVSFLTANMRADFGVVISASHNPFYDNGIKLFDADGFKIPDKAEHKISEMILDQSHTWDYPDPSSVGRAHKIKDALGRYIVYLKNTFPSTLSLEGLRIVLDCANGANYKVAPLALEELGAELIKIGTDPNGLNINHQCGSLFPEYVAKKVIEMRADIGLALDGDADRLIVVDEKGIILNGDQIMALCAQDLMRQNKLPGNILVATVMSNMALEVFMKEKKGALIRSNVGDRYVMEAMRKHGAMFGGEQSGHLIFREYSNTGDGLLAALQILRIMKQYERPLSSLAGLLQLFPQRLINVNVKQKRPIETMPTLLKTIQRIETAFSGRGRVLLRYSGTEPLCRVMVEGESDSKVNTYAEELADIVAKSLAE.

The active-site Phosphoserine intermediate is Ser102. Mg(2+)-binding residues include Ser102, Asp244, Asp246, and Asp248. Phosphoserine is present on Ser102.

It belongs to the phosphohexose mutase family. It depends on Mg(2+) as a cofactor. Post-translationally, activated by phosphorylation.

The catalysed reaction is alpha-D-glucosamine 1-phosphate = D-glucosamine 6-phosphate. In terms of biological role, catalyzes the conversion of glucosamine-6-phosphate to glucosamine-1-phosphate. This is Phosphoglucosamine mutase from Lawsonia intracellularis (strain PHE/MN1-00).